We begin with the raw amino-acid sequence, 426 residues long: Enolase (426 aa).

The interval Pro38–Gly60 is disordered. Residues Glu47 to Arg58 are compositionally biased toward basic and acidic residues. Gln163 contacts (2R)-2-phosphoglycerate. Residue Glu205 is the Proton donor of the active site. Positions 242, 285, and 312 each coordinate Mg(2+). The (2R)-2-phosphoglycerate site is built by Lys337, Arg366, Ser367, and Lys388. Lys337 serves as the catalytic Proton acceptor.

Belongs to the enolase family. Mg(2+) is required as a cofactor.

The protein localises to the cytoplasm. The protein resides in the secreted. Its subcellular location is the cell surface. The enzyme catalyses (2R)-2-phosphoglycerate = phosphoenolpyruvate + H2O. The protein operates within carbohydrate degradation; glycolysis; pyruvate from D-glyceraldehyde 3-phosphate: step 4/5. Catalyzes the reversible conversion of 2-phosphoglycerate (2-PG) into phosphoenolpyruvate (PEP). It is essential for the degradation of carbohydrates via glycolysis. The chain is Enolase from Caulobacter sp. (strain K31).